We begin with the raw amino-acid sequence, 517 residues long: Cytochrome P450 monooxygenase calE (517 aa).

N-linked (GlcNAc...) asparagine glycosylation occurs at Asn8. A helical membrane pass occupies residues Ser14 to Val34. Cys458 contributes to the heme binding site.

Belongs to the cytochrome P450 family. Requires heme as cofactor.

The protein resides in the membrane. Its pathway is secondary metabolite biosynthesis. Functionally, cytochrome P450 monooxygenase; part of the gene cluster that mediates the biosynthesis of calbistrin A and related compounds. Calbistrin A is a secondary metabolite with an interesting structure that was recently found to have bioactivity against leukemia cells. It consists of two polyketides linked by an ester bond: a bicyclic decalin containing polyketide and a linear 12 carbon dioic acid structure. The polyketide synthase calA is probably responsible for forming the decalin moiety. Because calA lacks a designated enoylreductase (ER) domain, the required activity is provided by the trans-enoyl reductase calK. Following release from the PKS, calF then probably catalyzes the oxidation and the subsequent Diels Alder cycloisomerization that lead to the formation of the decalin moiety. The decalin polyketide backbone includes two C-methyl groups, at C7 and C11 in backbone, of which the C7 position is probably methylated by the methyltransferase domain of calA. A candidate for adding the methyl group at C11, if not done by CalA, is the cluster methyltransferase calH. Several additional tailoring enzymes within the cluster could be involved in the modification of the decalin polyketide product. Those include the 3 cytochrome P450 monooxygenases CalE, CalG and CalL, of which one might be responsible for the introduction of the extra hydroxyl group attached to the backbone of the decalin moiety, at position C9 in the backbone, that allows for attachment of the linear moiety. One tailoring enzyme activity that is expected to be involved in biosynthesis of calbistrin is an acyltransferase for connecting the two polyketide synthase products, and which could be performed by the cluster acyltransferase calJ. The enzyme responsible for the biosynthesis of the linear moiety, probably a second PKS, has not been identified yet. This is Cytochrome P450 monooxygenase calE from Penicillium decumbens.